We begin with the raw amino-acid sequence, 178 residues long: NAD(P)H-quinone oxidoreductase subunit 6, chloroplastic (178 aa).

Transmembrane regions (helical) follow at residues 10–30 (LIVA…VIFF), 33–53 (IVYA…LYLF), 64–84 (ILIY…LISL), 100–120 (ISAF…LQTP), and 148–168 (LLPF…AVSI).

It belongs to the complex I subunit 6 family. In terms of assembly, NDH is composed of at least 16 different subunits, 5 of which are encoded in the nucleus.

The protein localises to the plastid. Its subcellular location is the chloroplast thylakoid membrane. The enzyme catalyses a plastoquinone + NADH + (n+1) H(+)(in) = a plastoquinol + NAD(+) + n H(+)(out). It carries out the reaction a plastoquinone + NADPH + (n+1) H(+)(in) = a plastoquinol + NADP(+) + n H(+)(out). In terms of biological role, NDH shuttles electrons from NAD(P)H:plastoquinone, via FMN and iron-sulfur (Fe-S) centers, to quinones in the photosynthetic chain and possibly in a chloroplast respiratory chain. The immediate electron acceptor for the enzyme in this species is believed to be plastoquinone. Couples the redox reaction to proton translocation, and thus conserves the redox energy in a proton gradient. This chain is NAD(P)H-quinone oxidoreductase subunit 6, chloroplastic (ndhG), found in Chara vulgaris (Common stonewort).